The primary structure comprises 325 residues: Elongation factor P--(R)-beta-lysine ligase (325 aa).

76 to 78 (SPE) lines the substrate pocket. Residues 100 to 102 (RNE) and asparagine 109 contribute to the ATP site. Tyrosine 118 lines the substrate pocket. 244-245 (EL) contacts ATP. Glutamate 251 contributes to the substrate binding site. Position 300 (glycine 300) interacts with ATP.

The protein belongs to the class-II aminoacyl-tRNA synthetase family. EpmA subfamily. As to quaternary structure, homodimer.

The catalysed reaction is D-beta-lysine + L-lysyl-[protein] + ATP = N(6)-((3R)-3,6-diaminohexanoyl)-L-lysyl-[protein] + AMP + diphosphate + H(+). In terms of biological role, with EpmB is involved in the beta-lysylation step of the post-translational modification of translation elongation factor P (EF-P) on 'Lys-34'. Catalyzes the ATP-dependent activation of (R)-beta-lysine produced by EpmB, forming a lysyl-adenylate, from which the beta-lysyl moiety is then transferred to the epsilon-amino group of EF-P 'Lys-34'. The polypeptide is Elongation factor P--(R)-beta-lysine ligase (Salmonella dublin (strain CT_02021853)).